The chain runs to 248 residues: MAGHSQFKNIMHRKGRVDAVRSKVFGKLAREITVAAKLGVPDPAMNPRLRAAMLAARAENMPKDNIERAIKKATGGEGENYEEIRYEGYGPGGAALIVEAQTDNRNRTASDVRSAFTKAGGSLAETGAVSFMFDRVGLVAFDAKVADADAMLEAAIEAGADDVKSDESGHEVTCEHGALGEVAKALEARFGEPRRTALVWRPQNTVEVDDETGEKLIRLVEMIEDQDDVQNVFVNFAVSDALMARMQD.

Belongs to the TACO1 family.

It localises to the cytoplasm. In Methylobacterium sp. (strain 4-46), this protein is Probable transcriptional regulatory protein M446_6579.